Here is a 665-residue protein sequence, read N- to C-terminus: Methionine--tRNA ligase (665 aa).

A 'HIGH' region motif is present at residues 12 to 22; sequence YYPSGKLHIGS. The 'KMSKS' region motif lies at 308–312; that stretch reads KMSKS. Lysine 311 contributes to the ATP binding site. One can recognise a tRNA-binding domain in the interval 562–665; the sequence is TFDAVEIRVA…PSVPNGSIIG (104 aa).

The protein belongs to the class-I aminoacyl-tRNA synthetase family. MetG type 2B subfamily. As to quaternary structure, homodimer.

The protein localises to the cytoplasm. The enzyme catalyses tRNA(Met) + L-methionine + ATP = L-methionyl-tRNA(Met) + AMP + diphosphate. In terms of biological role, is required not only for elongation of protein synthesis but also for the initiation of all mRNA translation through initiator tRNA(fMet) aminoacylation. The protein is Methionine--tRNA ligase (metG) of Streptococcus pyogenes serotype M6 (strain ATCC BAA-946 / MGAS10394).